Reading from the N-terminus, the 329-residue chain is Cathepsin K (329 aa).

An N-terminal signal peptide occupies residues 1–15 (MWGLKVLLLPVVSFA). Positions 16 to 114 (LHPEEILDTQ…TLYIPDWEGR (99 aa)) are cleaved as a propeptide — activation peptide. N-linked (GlcNAc...) asparagine glycosylation occurs at asparagine 103. 2 disulfides stabilise this stretch: cysteine 136–cysteine 177 and cysteine 170–cysteine 210. The active site involves cysteine 139. N-linked (GlcNAc...) asparagine glycosylation occurs at asparagine 268. Cysteines 269 and 318 form a disulfide. Residues histidine 276 and asparagine 296 contribute to the active site.

This sequence belongs to the peptidase C1 family. Predominantly expressed in osteclasts (bones).

Its subcellular location is the lysosome. The protein localises to the secreted. It localises to the apical cell membrane. The catalysed reaction is Broad proteolytic activity. With small-molecule substrates and inhibitors, the major determinant of specificity is P2, which is preferably Leu, Met &gt; Phe, and not Arg.. Its function is as follows. Thiol protease involved in osteoclastic bone resorption and may participate partially in the disorder of bone remodeling. Displays potent endoprotease activity against fibrinogen at acid pH. May play an important role in extracellular matrix degradation. Involved in the release of thyroid hormone thyroxine (T4) by limited proteolysis of TG/thyroglobulin in the thyroid follicle lumen. In Oryctolagus cuniculus (Rabbit), this protein is Cathepsin K (CTSK).